The chain runs to 72 residues: Large ribosomal subunit protein bL31 (72 aa).

The protein belongs to the bacterial ribosomal protein bL31 family. Type A subfamily. As to quaternary structure, part of the 50S ribosomal subunit.

Its function is as follows. Binds the 23S rRNA. The sequence is that of Large ribosomal subunit protein bL31 from Rhodospirillum rubrum (strain ATCC 11170 / ATH 1.1.1 / DSM 467 / LMG 4362 / NCIMB 8255 / S1).